The sequence spans 315 residues: Adenine deaminase (315 aa).

3 residues coordinate Zn(2+): His14, His16, and His194. The Proton donor role is filled by Glu197. Asp275 is a binding site for Zn(2+). Residue Asp276 participates in substrate binding.

It belongs to the metallo-dependent hydrolases superfamily. Adenosine and AMP deaminases family. Adenine deaminase type 2 subfamily. Zn(2+) serves as cofactor.

The enzyme catalyses adenine + H2O + H(+) = hypoxanthine + NH4(+). Catalyzes the hydrolytic deamination of adenine to hypoxanthine. Plays an important role in the purine salvage pathway and in nitrogen catabolism. The chain is Adenine deaminase from Ectopseudomonas mendocina (strain ymp) (Pseudomonas mendocina).